Reading from the N-terminus, the 552-residue chain is Leucine-rich repeat-containing protein 56 (552 aa).

LRR repeat units follow at residues asparagine 94 to leucine 115, histidine 117 to leucine 138, glutamate 139 to glutamate 160, glutamine 161 to glutamine 182, and arginine 186 to serine 206. Disordered stretches follow at residues alanine 348 to cysteine 375 and glutamine 401 to leucine 435.

This sequence belongs to the LRRC56 family. As to quaternary structure, interacts with IFT88.

The protein localises to the cell projection. Its subcellular location is the cilium. Its function is as follows. Required for the assembly of dynein arms. The sequence is that of Leucine-rich repeat-containing protein 56 (Lrrc56) from Mus musculus (Mouse).